Consider the following 404-residue polypeptide: Keratin, type I cuticular Ha3-I (404 aa).

The segment at 1–56 (MSYSCGLPSLSCRTSCSSRPCVPPSCHGCTLPGACNIPANVSNCNWFCEGSFNGSE) is head. An IF rod domain is found at 56-367 (EKETMQFLND…SLLESEDCKL (312 aa)). The tract at residues 57–91 (KETMQFLNDRLASYLEKVRQLERDNAELENLIRER) is coil 1A. A linker 1 region spans residues 92–102 (SQQQEPLVCAS). The coil 1B stretch occupies residues 103 to 203 (YQSYFKTIEE…HEQEVNTLRC (101 aa)). Residues 204 to 219 (QLGDRLNVEVDAAPTV) are linker 12. Positions 220–363 (DLNQVLNETR…NTYRSLLESE (144 aa)) are coil 2. The tract at residues 364–404 (DCKLPSNPCATTNACDKSTGPCISNPCGLRARCGPCNTFGY) is tail.

The protein belongs to the intermediate filament family. As to expression, expressed in the hair follicles.

The protein is Keratin, type I cuticular Ha3-I (KRT33A) of Homo sapiens (Human).